Here is a 301-residue protein sequence, read N- to C-terminus: Protoheme IX farnesyltransferase (301 aa).

9 consecutive transmembrane segments (helical) span residues 29-49, 51-71, 96-116, 123-143, 151-171, 177-197, 223-243, 244-264, and 281-301; these read VVALMLLTVLVGMCLAVPGTV, LVPLIAGMAGIGMMAGSAAAF, ISIIKAISFASILGTLGFIIL, LTAWLTFASLIGYAVVYTAYL, IVVGGLAGAMPPLLGWTAVTG, ALLLVIIIFAWTPPHFWALAI, CIFLYTVLLAIACLLPVLVGM, CGPVYLVSSTLLSAGFIYKAW, and FSIYHLMLLFIALLVDHYLWV.

The protein belongs to the UbiA prenyltransferase family. Protoheme IX farnesyltransferase subfamily.

The protein localises to the cell inner membrane. It catalyses the reaction heme b + (2E,6E)-farnesyl diphosphate + H2O = Fe(II)-heme o + diphosphate. Its pathway is porphyrin-containing compound metabolism; heme O biosynthesis; heme O from protoheme: step 1/1. Functionally, converts heme B (protoheme IX) to heme O by substitution of the vinyl group on carbon 2 of heme B porphyrin ring with a hydroxyethyl farnesyl side group. This chain is Protoheme IX farnesyltransferase, found in Shewanella pealeana (strain ATCC 700345 / ANG-SQ1).